Here is a 490-residue protein sequence, read N- to C-terminus: RNA-binding protein P (490 aa).

The interval 1 to 112 (MGKKRKLDSK…EEEEAAERDA (112 aa)) is disordered. Low complexity predominate over residues 13–36 (AAARSAAARAAAAAAAAAAAAAVA). Over residues 74 to 108 (GGEEEEVEEVEVEEEVEVDEDEDGEGEGEEEEEAA) the composition is skewed to acidic residues. RRM domains follow at residues 156 to 233 (RKIF…LASV) and 267 to 343 (RKIF…QKAI).

As to quaternary structure, forms homodimers. Interacts with RBP-L and RBP-208. Interacts with NSF.

Its subcellular location is the nucleus. It localises to the cytoplasm. In terms of biological role, RNA-binding protein that binds to a cis-localization element or zipcode, within the 5'-CDS of prolamine RNA. Binds strongly to glutelin mRNA, particularly to 3'-UTR and zipcode RNA. Recognizes and binds to glutelin zipcode RNA, which is required for proper mRNA localization to cisternal endoplasmic reticulum. Exhibits strong binding activity to a glutelin intron sequence and may participate in mRNA splicing. Required for the correct localization of glutelin and prolamine mRNA in endosperm cells during grain development. RBP-P and RBP-L form a quaternary complex with the membrane trafficking factors NSF and RAB5A. This quaternay complex carries glutelin mRNAs for active transport on endosomes to the cortical endoplasmic reticulum membrane, and enables endosome-mediated glutelin mRNA transport in endosperm cells. This is RNA-binding protein P from Oryza sativa subsp. japonica (Rice).